A 170-amino-acid polypeptide reads, in one-letter code: uncharacterized protein (170 aa).

This is an uncharacterized protein from Archaeoglobus fulgidus (strain ATCC 49558 / DSM 4304 / JCM 9628 / NBRC 100126 / VC-16).